A 1523-amino-acid polypeptide reads, in one-letter code: Lysophospholipase nte1 (1523 aa).

Residues 1-66 are Cytoplasmic-facing; the sequence is MADGVTLVDS…LPPVPTTMAG (66 aa). Residues 67-87 form a helical membrane-spanning segment; the sequence is WIGWVFSFFFQVIPSVLYWVI. Residues 88-109 lie on the Lumenal side of the membrane; that stretch reads TFSTITLPTWLFTLFSMSLTFT. Residues 110-130 form a helical membrane-spanning segment; the sequence is MNFTTLLLIVLAMVSTISWFI. The Cytoplasmic portion of the chain corresponds to 131–1523; sequence RYRFLNMYSR…RTMAPRRASI (1393 aa). 2 disordered regions span residues 309-384 and 524-545; these read VPNS…KSVH and RAATVVTPESAPAEHDTYGVSP. Residues 370-382 show a composition bias toward basic residues; that stretch reads ESRKHSSRKRRKS. A nucleoside 3',5'-cyclic phosphate-binding positions include 681–800 and 841–961; these read GGTS…GAVA and RLTS…IAQR. The region spanning 1220-1384 is the PNPLA domain; that stretch reads LVLGGGGARG…IDNLTVDHMK (165 aa). The GXGXXG motif lies at 1224 to 1229; it reads GGGARG. A GXSXG motif is present at residues 1251-1255; that stretch reads GTSIG. The Nucleophile role is filled by S1253. Residue D1371 is the Proton acceptor of the active site. The DGA/G motif lies at 1371–1373; that stretch reads DGG. Residues 1502 to 1523 form a disordered region; the sequence is LPEETEEKKKLQRTMAPRRASI.

The protein belongs to the NTE family.

It localises to the endoplasmic reticulum membrane. The catalysed reaction is a 1-acyl-sn-glycero-3-phosphocholine + H2O = sn-glycerol 3-phosphocholine + a fatty acid + H(+). Inhibited by organophosphorus esters. Its function is as follows. Intracellular phospholipase B that catalyzes the double deacylation of phosphatidylcholine (PC) to glycerophosphocholine (GroPCho). Plays an important role in membrane lipid homeostasis. Responsible for the rapid PC turnover in response to inositol, elevated temperatures, or when choline is present in the growth medium. The protein is Lysophospholipase nte1 (nte1) of Neosartorya fischeri (strain ATCC 1020 / DSM 3700 / CBS 544.65 / FGSC A1164 / JCM 1740 / NRRL 181 / WB 181) (Aspergillus fischerianus).